Here is a 555-residue protein sequence, read N- to C-terminus: MSVQTVSIQPFTDQKPGTSGLRKKVKVFQQPHYSEAFVTSILLSIPEGAEGAFLVIGGDGRYYNPEVIQKIAKISAAYGVKKLLIGQNGILSTPAASNLIRVRKATGGILLTASHNPGGPNADFGIKYNLCNGAPAPESVTNKIYETSKSLTSYKIAEIPDVDTSTIGTKTYGPLEVEIVHSTSDYLKMLKEIFDFDLIKEFLSTHKDFKVLFDGMHGVTGPYGVDIFVKELGLPQDSTMNCVPSPDFNGGHPDPNLVYAHELVEAVDKKGIHFGAASDGDGDRNMIYGANTFVSPGDSLAIIAHHAKLIPWFQKQGVYGLARSMPTSGAVDLVAKAQGLQSYEVPTGWKFFCNLFDNKKISICGEESFGTGSNHIREKDGVWAIVAWLNIIAGVAKQKPNETPSIASIQNEFWQTYGRTFFTRYDYENVDSDAANKLIANLSEKINNKDSFVGSTVSGRKVADAGNFAYTDLDGSVTKNQGLYVKFDDGSRLVVRLSGTGSSGATIRLYIEKYESDKSKFGMNTQDYLKDNVALAMSLLKFKEYIGREDPDVKT.

The alpha-D-glucose 1,6-bisphosphate site is built by Arg22 and Ser114. Ser114 acts as the Phosphoserine intermediate in catalysis. Residues Ser114, Asp279, Asp281, and Asp283 each coordinate Mg(2+). A Phosphoserine modification is found at Ser114. Positions 283, 284, 347, 366, 368, and 379 each coordinate alpha-D-glucose 1,6-bisphosphate.

It belongs to the phosphohexose mutase family. In terms of assembly, monomer. Requires Mg(2+) as cofactor.

It localises to the cytoplasm. It catalyses the reaction alpha-D-glucose 1-phosphate = alpha-D-glucose 6-phosphate. It carries out the reaction O-phospho-L-seryl-[protein] + alpha-D-glucose 1-phosphate = alpha-D-glucose 1,6-bisphosphate + L-seryl-[protein]. The enzyme catalyses alpha-D-glucose 1,6-bisphosphate + L-seryl-[protein] = O-phospho-L-seryl-[protein] + alpha-D-glucose 6-phosphate. In terms of biological role, catalyzes the reversible isomerization of alpha-D-glucose 1-phosphate to alpha-D-glucose 6-phosphate. The mechanism proceeds via the intermediate compound alpha-D-glucose 1,6-bisphosphate. Key enzyme in hexose metabolism. The reverse reaction is an essential step for biosynthesis because glucose 1-phosphate is the starting point for the synthesis of UDP-glucose, which acts as a precursor for the synthesis of oligosaccharides and trehalose. This chain is Phosphoglucomutase (pgmA), found in Aspergillus fumigatus (strain ATCC MYA-4609 / CBS 101355 / FGSC A1100 / Af293) (Neosartorya fumigata).